The chain runs to 743 residues: Envelope glycoprotein H (743 aa).

The signal sequence occupies residues 1 to 23; the sequence is MRPGLPPYLTVFTVYLLSHLPSQ. Residues 24–720 lie on the Virion surface side of the membrane; sequence RYGADAASEA…VVDATDSRLL (697 aa). Residues N56, N63, N68, and N193 are each glycosylated (N-linked (GlcNAc...) asparagine; by host). The segment at 218–281 is interaction with gL; that stretch reads YLMDELRYVK…QTEKHELLVL (64 aa). Residues N642 and N701 are each glycosylated (N-linked (GlcNAc...) asparagine; by host). Residues 721-741 traverse the membrane as a helical segment; it reads MMSVYALSAIIGIYLLYRMLK. Residues 742 to 743 lie on the Intravirion side of the membrane; sequence TC.

This sequence belongs to the herpesviridae glycoprotein H family. In terms of assembly, interacts with glycoprotein L (gL); this interaction is necessary for the correct processing and cell surface expression of gH. The heterodimer gH/gL seems to interact with gB trimers during fusion. Forms the envelope pentamer complex (PC) composed of gH, gL, UL128, UL130, and UL131A. The pentamer interacts with host NRP2. Forms the envelope trimer complex composed of gH, gL, and gO. The trimer interacts with host PDGFRA. The trimer also interacts with host EPHA2. Interacts with UL116. N-glycosylated, O-glycosylated, and sialylated.

Its subcellular location is the virion membrane. It is found in the host cell membrane. The protein localises to the host endosome membrane. The heterodimer glycoprotein H-glycoprotein L is required for the fusion of viral and plasma membranes leading to virus entry into the host cell. Following initial binding to host receptor, membrane fusion is mediated by the fusion machinery composed of gB and the heterodimer gH/gL. May also be involved in the fusion between the virion envelope and the outer nuclear membrane during virion morphogenesis. In human cytomegalovirus, forms two distincts complexes to mediate viral entry, a trimer and a pentamer at the surface of the virion envelope. The gH-gL-gO trimer is required for infection in fibroblasts by interacting with host PDGFRA, and in glioblastoma cells by interacting with host EPHA2. The gH-gL-UL128-UL130-UL131A pentamer is essential for viral entry in epithelial, endothelial and myeloid cells via interaction with host NRP2. The chain is Envelope glycoprotein H from Human cytomegalovirus (strain AD169) (HHV-5).